The chain runs to 284 residues: MEMO1 family protein SSO0066 (284 aa).

The protein belongs to the MEMO1 family.

In Saccharolobus solfataricus (strain ATCC 35092 / DSM 1617 / JCM 11322 / P2) (Sulfolobus solfataricus), this protein is MEMO1 family protein SSO0066.